Reading from the N-terminus, the 317-residue chain is Metaxin-1 (317 aa).

Residues lysine 38, lysine 41, and lysine 78 each participate in a glycyl lysine isopeptide (Lys-Gly) (interchain with G-Cter in ubiquitin) cross-link. The chain crosses the membrane as a helical span at residues 164 to 184 (EELEKELYQEARECLTLLSQR).

This sequence belongs to the metaxin family. Interacts with MTX2/metaxin-2. Associates with the mitochondrial contact site and cristae organizing system (MICOS) complex, composed of at least MICOS10/MIC10, CHCHD3/MIC19, CHCHD6/MIC25, APOOL/MIC27, IMMT/MIC60, APOO/MIC23/MIC26 and QIL1/MIC13. This complex was also known under the names MINOS or MitOS complex. The MICOS complex associates with mitochondrial outer membrane proteins SAMM50, MTX1 and MTX2 (together described as components of the mitochondrial outer membrane sorting assembly machinery (SAM) complex) and DNAJC11, mitochondrial inner membrane protein TMEM11 and with HSPA9. The MICOS and SAM complexes together with DNAJC11 are part of a large protein complex spanning both membranes termed the mitochondrial intermembrane space bridging (MIB) complex. Interacts with ARMC1. In terms of processing, ubiquitinated by PRKN during mitophagy, leading to its degradation and enhancement of mitophagy. Deubiquitinated by USP30.

Its subcellular location is the mitochondrion outer membrane. In terms of biological role, involved in transport of proteins into the mitochondrion. Essential for embryonic development. In Sus scrofa (Pig), this protein is Metaxin-1 (MTX1).